The sequence spans 591 residues: L-fucose isomerase (591 aa).

Catalysis depends on proton acceptor residues glutamate 337 and aspartate 361. Residues glutamate 337, aspartate 361, and histidine 528 each contribute to the Mn(2+) site.

Belongs to the L-fucose isomerase family. As to quaternary structure, homohexamer. Mn(2+) is required as a cofactor.

It is found in the cytoplasm. The enzyme catalyses L-fucose = L-fuculose. The protein operates within carbohydrate degradation; L-fucose degradation; L-lactaldehyde and glycerone phosphate from L-fucose: step 1/3. In terms of biological role, converts the aldose L-fucose into the corresponding ketose L-fuculose. This Salmonella typhi protein is L-fucose isomerase.